Reading from the N-terminus, the 594-residue chain is Sodium-dependent glucose transporter 1 (594 aa).

Transmembrane regions (helical) follow at residues 77-97, 115-137, 144-161, 166-186, 205-225, 269-289, 311-331, 349-371, 393-413, 439-459, and 467-487; these read WLVS…ISVL, LSYI…GILF, LLLG…SGTP, AWVL…LDTG, ALHF…KLLF, IVIG…YFCI, TLII…VAYG, AAGL…IFFA, LLCL…LYGI, IFVV…GFLL, and LLMY…PVLY.

Belongs to the major facilitator superfamily.

It is found in the apical cell membrane. In terms of biological role, may function as a sodium-dependent glucose transporter. Potential channels for urea in the inner medulla of kidney. The sequence is that of Sodium-dependent glucose transporter 1 (mfsd4b) from Danio rerio (Zebrafish).